A 534-amino-acid chain; its full sequence is Zinc finger protein 69 homolog B (534 aa).

Glycyl lysine isopeptide (Lys-Gly) (interchain with G-Cter in SUMO2) cross-links involve residues Lys37 and Lys40. A KRAB domain is found at 74–145 (LTFKDVSVDF…ERDISGVPSS (72 aa)). Residues Lys178 and Lys235 each participate in a glycyl lysine isopeptide (Lys-Gly) (interchain with G-Cter in SUMO2) cross-link. 9 consecutive C2H2-type zinc fingers follow at residues 279 to 301 (FECN…MRIH), 307 to 329 (FRCK…QRIH), 335 to 357 (YECK…VRIH), 363 to 385 (YECR…LRTH), 391 to 413 (FTCK…EIIH), 419 to 441 (YICN…QRTH), 447 to 469 (YKCK…QRVH), 475 to 497 (YECS…QRIH), and 503 to 525 (YDCN…CKTH).

This sequence belongs to the krueppel C2H2-type zinc-finger protein family.

The protein resides in the nucleus. May be involved in transcriptional regulation. Essential for Golgi structural integrity. This Homo sapiens (Human) protein is Zinc finger protein 69 homolog B (ZFP69B).